We begin with the raw amino-acid sequence, 229 residues long: Cytidylate kinase (229 aa).

12–20 (GPSGSGKGT) contacts ATP.

This sequence belongs to the cytidylate kinase family. Type 1 subfamily.

It is found in the cytoplasm. It carries out the reaction CMP + ATP = CDP + ADP. The enzyme catalyses dCMP + ATP = dCDP + ADP. This Pseudomonas fluorescens (strain Pf0-1) protein is Cytidylate kinase.